We begin with the raw amino-acid sequence, 151 residues long: Protein ECM12 (151 aa).

A glycan (N-linked (GlcNAc...) asparagine) is linked at Asn2. The next 2 helical transmembrane spans lie at 17–37 (LLVFYFHIKQQAIMPFFIFFF) and 51–71 (AFLAKHVFVGVCSPFFVVGFF). N-linked (GlcNAc...) asparagine glycans are attached at residues Asn132 and Asn137.

It is found in the membrane. Its function is as follows. May be involved in cell wall organization and biogenesis. The protein is Protein ECM12 (ECM12) of Saccharomyces cerevisiae (strain ATCC 204508 / S288c) (Baker's yeast).